A 453-amino-acid polypeptide reads, in one-letter code: Midnolin (453 aa).

The region spanning 20 to 94 (MNLNIQSTTG…LTLLPSVEAG (75 aa)) is the Ubiquitin-like domain. 4 disordered regions span residues 185-219 (HLAS…TTSV), 231-256 (PCAE…RSRK), 330-374 (SQAR…QTEN), and 390-434 (QKRL…IDFE). Low complexity-rich tracts occupy residues 188 to 204 (SCTP…PTAS) and 239 to 252 (SSRG…SASS). Positions 330-362 (SQARNPKATSPQSSEPQQTTHPVGHCQAQTRTC) are enriched in polar residues. Over residues 365–374 (SGDRLRQTEN) the composition is skewed to basic and acidic residues. The segment covering 390 to 399 (QKRLRRKARR) has biased composition (basic residues). Low complexity predominate over residues 415-428 (RTSSNSSTSSGEGS).

Its subcellular location is the nucleus. The protein localises to the cytoplasm. It localises to the cytosol. It is found in the nucleolus. Facilitates ubiquitin-independent proteasomal degradation of polycomb protein CBX4. Plays a role in inhibiting the activity of glucokinase GCK and both glucose-induced and basal insulin secretion. The chain is Midnolin (midn) from Xenopus tropicalis (Western clawed frog).